The sequence spans 353 residues: Rhodopsin (353 aa).

Residues 1-36 are Extracellular-facing; sequence MNGTEGPYFYVPMVNTSGIVRSPYEYPQYYLVNPAA. Asparagine 2 and asparagine 15 each carry an N-linked (GlcNAc...) asparagine glycan. Residues 37–61 form a helical membrane-spanning segment; that stretch reads YARLGAYMFLLILVGFPINFLTLYV. Residues 62–73 lie on the Cytoplasmic side of the membrane; sequence TIEHKKLRTPLN. The chain crosses the membrane as a helical span at residues 74 to 96; sequence YILLNLAVADLFMVFGGFTTTMY. Residues 97-110 are Extracellular-facing; the sequence is TSMHGYFVLGRLGC. The cysteines at positions 110 and 187 are disulfide-linked. A helical membrane pass occupies residues 111-133; that stretch reads NIEGFFATLGGEIALWSLVVLAI. The 'Ionic lock' involved in activated form stabilization motif lies at 134–136; it reads ERW. The Cytoplasmic portion of the chain corresponds to 134–152; it reads ERWVVVCKPISNFRFGENH. The chain crosses the membrane as a helical span at residues 153-173; it reads AIMGLAFTWLMALACAAPPLV. Residues 174–202 are Extracellular-facing; it reads GWSRYIPEGMQCSCGIDYYTRAEGFNNES. N-linked (GlcNAc...) asparagine glycosylation occurs at asparagine 200. A helical membrane pass occupies residues 203–224; that stretch reads FVIYMFVCHFTVPLMVVFFCYG. Topologically, residues 225–252 are cytoplasmic; it reads RLLCAVKEAAAAQQESETTQRAEREVTR. A helical membrane pass occupies residues 253-274; it reads MVIMMVVAFLVCWLPYASVAWW. The Extracellular segment spans residues 275–286; sequence IFTHQGSEFGPV. Residues 287-308 form a helical membrane-spanning segment; it reads FMTIPAFFAKSSSIYNPMIYIC. Residue lysine 296 is modified to N6-(retinylidene)lysine. Topologically, residues 309–353 are cytoplasmic; it reads LNKQFRHCMITTLCCGKNPFEEEEGASTASKTEASSVSSSSVSPA. 2 S-palmitoyl cysteine lipidation sites follow: cysteine 322 and cysteine 323. Residues 331 to 353 form a disordered region; it reads EEGASTASKTEASSVSSSSVSPA. The span at 334-353 shows a compositional bias: low complexity; it reads ASTASKTEASSVSSSSVSPA.

Belongs to the G-protein coupled receptor 1 family. Opsin subfamily. In terms of processing, phosphorylated on some or all of the serine and threonine residues present in the C-terminal region. Contains one covalently linked retinal chromophore.

The protein resides in the membrane. It is found in the cell projection. It localises to the cilium. The protein localises to the photoreceptor outer segment. Functionally, photoreceptor required for image-forming vision at low light intensity. While most salt water fish species use retinal as chromophore, most freshwater fish use 3-dehydroretinal, or a mixture of retinal and 3-dehydroretinal. Light-induced isomerization of 11-cis to all-trans retinal triggers a conformational change that activates signaling via G-proteins. Subsequent receptor phosphorylation mediates displacement of the bound G-protein alpha subunit by arrestin and terminates signaling. The sequence is that of Rhodopsin (rho) from Sarpa salpa (Salema).